Reading from the N-terminus, the 231-residue chain is Heptaprenylglyceryl phosphate synthase (231 aa).

Lysine 12 provides a ligand contact to sn-glycerol 1-phosphate. Mg(2+) contacts are provided by aspartate 14 and threonine 40. Residues 159–164 (YMEYSG), glycine 189, and 209–210 (GN) each bind sn-glycerol 1-phosphate.

Belongs to the GGGP/HepGP synthase family. Group I subfamily. As to quaternary structure, homodimer. The cofactor is Mg(2+).

The enzyme catalyses sn-glycerol 1-phosphate + all-trans-heptaprenyl diphosphate = 3-heptaprenyl-sn-glycero-1-phosphate + diphosphate. It participates in membrane lipid metabolism; glycerophospholipid metabolism. Functionally, prenyltransferase that catalyzes in vivo the transfer of the heptaprenyl moiety of heptaprenyl pyrophosphate (HepPP; 35 carbon atoms) to the C3 hydroxyl of sn-glycerol-1-phosphate (G1P), producing heptaprenylglyceryl phosphate (HepGP). This reaction is an ether-bond-formation step in the biosynthesis of archaea-type G1P-based membrane lipids found in Bacillales. This is Heptaprenylglyceryl phosphate synthase from Anoxybacillus flavithermus (strain DSM 21510 / WK1).